The sequence spans 4241 residues: Intermembrane lipid transfer protein vps13E (4241 aa).

Residues 5–97 (ILPGLLKKIL…GPKDIINTFS (93 aa)) enclose the Chorein N-terminal domain. The span at 120 to 140 (IDSNSNNNNKKNAPSSSSSND) shows a compositional bias: low complexity. Disordered stretches follow at residues 120–143 (IDSN…DDFF), 234–340 (LSKN…QQQQ), 942–986 (LGTG…VEKE), 1220–1256 (NNNN…NQKP), 1345–1369 (TTTT…QNRH), 1534–1571 (KPSS…YNNN), 2148–2192 (QQQQ…PNVH), and 2217–2282 (VTEK…NNIN). Residues 234-254 (LSKNTSTHQQQQPTFNPYVGS) are compositionally biased toward polar residues. Residues 255–264 (QQQQQQQPQQ) are compositionally biased toward low complexity. Over residues 279 to 289 (FMNNKNSDEGI) the composition is skewed to polar residues. Low complexity-rich tracts occupy residues 290–313 (SSSS…LNDN), 325–340 (QPTP…QQQQ), and 942–952 (LGTGNGINNNN). The segment covering 968–986 (DDGKYPEQDDLDDSKVEKE) has biased composition (basic and acidic residues). Over residues 1220 to 1253 (NNNNNNNNNNNNNNNNNNNNNRNLNNNNNNNNNN) the composition is skewed to low complexity. Residues 1352–1369 (RYHHQNHHNHQHKKQNRH) are compositionally biased toward basic residues. Composition is skewed to low complexity over residues 1538–1551 (KDNN…NNSD), 1559–1571 (DSSS…YNNN), and 2148–2177 (QQQQ…NNNN). Residues 2178-2188 (VSGNTINNKSV) show a composition bias toward polar residues. Acidic residues predominate over residues 2246-2259 (SDDDDDEGEDEDIG). A compositionally biased stretch (polar residues) spans 2265–2282 (DHSTSSAPTSRSNYNNIN). An SHR-BD domain is found at 2825 to 3134 (KIVFYNQYWI…IPYVWDLPLE (310 aa)). 3 disordered regions span residues 3973–4000 (PTTT…YPTE), 4059–4094 (YQHS…RQLQ), and 4109–4140 (KSMA…SGSG). Positions 3974–3984 (TTTTTTNTTTT) are enriched in low complexity. Polar residues predominate over residues 3985–4000 (PYQSSQNIHSTPYPTE). Over residues 4128 to 4140 (SNNRLSLTPSGSG) the composition is skewed to polar residues.

The protein belongs to the VPS13 family.

It localises to the membrane. In terms of biological role, mediates the transfer of lipids between membranes at organelle contact sites. The polypeptide is Intermembrane lipid transfer protein vps13E (vps13E) (Dictyostelium discoideum (Social amoeba)).